Here is a 200-residue protein sequence, read N- to C-terminus: MGNSKSGALSKEILEELQLNTKFSEEELCSWYQSFLKDCPTGRITQQQFQSIYAKFFPDTDPKAYAQHVFRSFDSNLDGTLDFKEYVIALHMTTAGKTNQKLEWAFSLYDVDGNGTISKNEVLEIVMAIFKMITPEDVKLLPDDENTPEKRAEKIWKYFGKNDDDKLTEKEFIEGTLANKEILRLIQFEPQKVKEKMKNA.

Gly2 is lipidated: N-myristoyl glycine. EF-hand domains are found at residues 25–60 (EEEL…FPDT), 61–96 (DPKA…TTAG), 97–132 (KTNQ…IFKM), and 147–182 (TPEK…NKEI). At Cys39 the chain carries Cysteine sulfenic acid (-SOH). Ca(2+) is bound by residues Asp74, Asn76, Asp78, Thr80, Glu85, Asp110, Asp112, Asn114, Thr116, and Glu121. Residues 189 to 192 (EPQK) form an interaction with GRK1 region.

This sequence belongs to the recoverin family. In terms of assembly, homodimer; disulfide-linked. Homodimerization is caused by prolonged intense illumination. May form a complex composed of RHO, GRK1 and RCVRN in a Ca(2+)-dependent manner; RCVRN prevents the interaction between GRK1 and RHO. Interacts (via C-terminus) with GRK1 (via N-terminus); the interaction is Ca(2+)-dependent. In terms of processing, the N-terminal glycine is linked to one of four different types of acyl groups. The most abundant is myristoleate (14:1), but 14:0, 14:2, and 12:0 acyl residues are also present. The Ca(2+) induced exposure of the myristoyl group, known as the calcium-myristoyl switch, promotes RCVRN binding to the photoreceptor cell membranes only when intracellular Ca(2+) concentration is high. Post-translationally, oxidation on Cys-39 occurs in response to prolonged intense illumination and results in the formation of disulfide homodimers, and to a lesser extent disulfide-linked heterodimers. Retina and pineal gland.

Its subcellular location is the photoreceptor inner segment. The protein resides in the cell projection. It localises to the cilium. The protein localises to the photoreceptor outer segment. It is found in the photoreceptor outer segment membrane. Its subcellular location is the perikaryon. Acts as a calcium sensor and regulates phototransduction of cone and rod photoreceptor cells. Modulates light sensitivity of cone photoreceptor in dark and dim conditions. In response to high Ca(2+) levels induced by low light levels, prolongs RHO/rhodopsin activation in rod photoreceptor cells by binding to and inhibiting GRK1-mediated phosphorylation of RHO/rhodopsin. Plays a role in scotopic vision/enhances vision in dim light by enhancing signal transfer between rod photoreceptors and rod bipolar cells. Improves rod photoreceptor sensitivity in dim light and mediates response of rod photoreceptors to facilitate detection of change and motion in bright light. This is Recoverin (RCVRN) from Homo sapiens (Human).